A 569-amino-acid chain; its full sequence is 2-succinyl-5-enolpyruvyl-6-hydroxy-3-cyclohexene-1-carboxylate synthase (569 aa).

This sequence belongs to the TPP enzyme family. MenD subfamily. Homodimer. Mg(2+) is required as a cofactor. Requires Mn(2+) as cofactor. The cofactor is thiamine diphosphate.

It catalyses the reaction isochorismate + 2-oxoglutarate + H(+) = 5-enolpyruvoyl-6-hydroxy-2-succinyl-cyclohex-3-ene-1-carboxylate + CO2. It participates in quinol/quinone metabolism; 1,4-dihydroxy-2-naphthoate biosynthesis; 1,4-dihydroxy-2-naphthoate from chorismate: step 2/7. It functions in the pathway cofactor biosynthesis; phylloquinone biosynthesis. Catalyzes the thiamine diphosphate-dependent decarboxylation of 2-oxoglutarate and the subsequent addition of the resulting succinic semialdehyde-thiamine pyrophosphate anion to isochorismate to yield 2-succinyl-5-enolpyruvyl-6-hydroxy-3-cyclohexene-1-carboxylate (SEPHCHC). This is 2-succinyl-5-enolpyruvyl-6-hydroxy-3-cyclohexene-1-carboxylate synthase from Microcystis aeruginosa (strain NIES-843 / IAM M-2473).